Here is a 300-residue protein sequence, read N- to C-terminus: N-carbamoylputrescine amidase (300 aa).

A CN hydrolase domain is found at 8-266 (VTVAALQFAC…EAVLVAQFDL (259 aa)). The active-site Proton acceptor is the glutamate 47. The active-site Proton donor is lysine 120. The Nucleophile role is filled by cysteine 157.

Belongs to the carbon-nitrogen hydrolase superfamily. Homooctamer.

It carries out the reaction N-carbamoylputrescine + H2O + 2 H(+) = putrescine + NH4(+) + CO2. The protein operates within amine and polyamine biosynthesis; putrescine biosynthesis via agmatine pathway; putrescine from N-carbamoylputrescine (amidase route): step 1/1. Its function is as follows. Involved in polyamine biosynthesis. This is N-carbamoylputrescine amidase (CPA) from Solanum tuberosum (Potato).